The chain runs to 1154 residues: Nitric oxide synthase, inducible (1154 aa).

Residues 22–58 (KDINNNVEKPPGATPSPSTQDDLKNHKHHNDSPQPLT) are disordered. A DINNN-motif; mediates interaction with SPSB1, SPSB2 and SPSB4 motif is present at residues 23 to 27 (DINNN). Positions 107 and 112 each coordinate Zn(2+). Residue Cys197 coordinates heme b. Residues Gln260, Trp369, Tyr370, and Glu374 each contribute to the L-arginine site. (6R)-L-erythro-5,6,7,8-tetrahydrobiopterin is bound by residues Arg378, Ile459, Trp460, and Phe473. Residue Tyr488 participates in heme b binding. The segment at 512–532 (LKVLVKAVLFASMLMRKTMAS) is calmodulin-binding. Residues 536–674 (VTILFATETG…AFRCWAVQTF (139 aa)) form the Flavodoxin-like domain. The FMN site is built by Thr542, Glu543, Thr544, Lys546, and Ser547. Tyr572 carries the phosphotyrosine modification. Positions 588, 589, 625, 632, and 658 each coordinate FMN. The 241-residue stretch at 727 to 967 (KNVFTLRLKS…VRSAGNFKLP (241 aa)) folds into the FAD-binding FR-type domain. Arg747 is a binding site for NADP(+). The FAD site is built by His769, Arg903, Tyr905, Ser906, Thr921, Ala923, Tyr927, Val940, Cys941, and Ser942. Residues Thr981, Arg1014, Ser1043, Arg1044, Lys1050, Tyr1052, Gln1054, and Asp1087 each contribute to the NADP(+) site.

Belongs to the NOS family. Homodimer. Interacts with NHERF1. Interacts with GAPDH; induced by oxidatively-modified low-densitity lipoprotein (LDL(ox)). Interacts with S100A8 and S100A9 to form the iNOS-S100A8/9 transnitrosylase complex. Interacts with SPSB1, SPSB2 and SPSB4. Interacts with ELOC and CUL5 in the presence of SPSB1 or SPSB2 or SPSB4. Forms a complex with ASL, ASS1 and HSP90AA1; the complex regulates cell-autonomous L-arginine synthesis and citrulline recycling while channeling extracellular L-arginine to nitric oxide synthesis pathway. Requires heme b as cofactor. FAD serves as cofactor. It depends on FMN as a cofactor. The cofactor is (6R)-L-erythro-5,6,7,8-tetrahydrobiopterin. Post-translationally, polyubiquitinated; mediated by SPSB1, SPSB2 and SPSB4, leading to proteasomal degradation.

The protein resides in the cytoplasm. It localises to the cytosol. It catalyses the reaction 2 L-arginine + 3 NADPH + 4 O2 + H(+) = 2 L-citrulline + 2 nitric oxide + 3 NADP(+) + 4 H2O. Regulated by calcium/calmodulin. Its function is as follows. Produces nitric oxide (NO) which is a messenger molecule with diverse functions throughout the body. In macrophages, NO mediates tumoricidal and bactericidal actions. Also has nitrosylase activity and mediates cysteine S-nitrosylation of cytoplasmic target proteins such PTGS2/COX2. As component of the iNOS-S100A8/9 transnitrosylase complex involved in the selective inflammatory stimulus-dependent S-nitrosylation of GAPDH implicated in regulation of the GAIT complex activity and probably multiple targets including ANXA5, EZR, MSN and VIM. Involved in inflammation, enhances the synthesis of pro-inflammatory mediators such as IL6 and IL8. The polypeptide is Nitric oxide synthase, inducible (NOS2) (Canis lupus familiaris (Dog)).